Here is a 692-residue protein sequence, read N- to C-terminus: Elongation factor G (692 aa).

One can recognise a tr-type G domain in the interval E8–L282. GTP-binding positions include A17–T24, D81–H85, and N135–D138.

The protein belongs to the TRAFAC class translation factor GTPase superfamily. Classic translation factor GTPase family. EF-G/EF-2 subfamily.

It is found in the cytoplasm. Catalyzes the GTP-dependent ribosomal translocation step during translation elongation. During this step, the ribosome changes from the pre-translocational (PRE) to the post-translocational (POST) state as the newly formed A-site-bound peptidyl-tRNA and P-site-bound deacylated tRNA move to the P and E sites, respectively. Catalyzes the coordinated movement of the two tRNA molecules, the mRNA and conformational changes in the ribosome. In Bacillus thuringiensis subsp. konkukian (strain 97-27), this protein is Elongation factor G.